Here is a 147-residue protein sequence, read N- to C-terminus: MAKEVAGLIKLQIKGGAANPSPPVGPALGSKGINIMEFCKQFNARTQDKAGKILPVIITYYADKSFDFVIKTPPVAIQLLELAKIKSGSAEPNRKKVAEITWEQVRTIAQDKMVDLNCFTIESAMTMVAGTARSMGIAVKGEFPGNN.

Belongs to the universal ribosomal protein uL11 family. As to quaternary structure, part of the ribosomal stalk of the 50S ribosomal subunit. Interacts with L10 and the large rRNA to form the base of the stalk. L10 forms an elongated spine to which L12 dimers bind in a sequential fashion forming a multimeric L10(L12)X complex. One or more lysine residues are methylated.

Its function is as follows. Forms part of the ribosomal stalk which helps the ribosome interact with GTP-bound translation factors. The polypeptide is Large ribosomal subunit protein uL11 (Phocaeicola vulgatus (strain ATCC 8482 / DSM 1447 / JCM 5826 / CCUG 4940 / NBRC 14291 / NCTC 11154) (Bacteroides vulgatus)).